A 350-amino-acid chain; its full sequence is S-adenosylmethionine:tRNA ribosyltransferase-isomerase (350 aa).

This sequence belongs to the QueA family. As to quaternary structure, monomer.

Its subcellular location is the cytoplasm. The enzyme catalyses 7-aminomethyl-7-carbaguanosine(34) in tRNA + S-adenosyl-L-methionine = epoxyqueuosine(34) in tRNA + adenine + L-methionine + 2 H(+). The protein operates within tRNA modification; tRNA-queuosine biosynthesis. Its function is as follows. Transfers and isomerizes the ribose moiety from AdoMet to the 7-aminomethyl group of 7-deazaguanine (preQ1-tRNA) to give epoxyqueuosine (oQ-tRNA). The protein is S-adenosylmethionine:tRNA ribosyltransferase-isomerase of Aliivibrio fischeri (strain ATCC 700601 / ES114) (Vibrio fischeri).